The chain runs to 490 residues: Beta-glucosidase 42 (490 aa).

A beta-D-glucoside is bound by residues Q35, H137, 182-183 (NE), Y317, and E388. Catalysis depends on E183, which acts as the Proton donor. E388 acts as the Nucleophile in catalysis. An N-linked (GlcNAc...) asparagine glycan is attached at N420. A beta-D-glucoside-binding positions include W437, 444-445 (EW), and F453.

This sequence belongs to the glycosyl hydrolase 1 family. As to expression, expressed at low levels predominantly in root epidermal cells.

It carries out the reaction Hydrolysis of terminal, non-reducing beta-D-glucosyl residues with release of beta-D-glucose.. Its function is as follows. Glucosidase that hydrolyzes scopolin and various beta-glucosides, cellooligosaccharides (mainly cellotriose) and laminarioligosaccharides. Can use p-nitrophenyl-beta-glucosides (pNP beta-Glc) and p-nitrophenyl-beta-D-fucosides (pNP beta-D-Fuc) as substrates, and, to a lower extent, beta-galactosides, beta-mannosides and beta-xylosides. Involved in the secretion of root-derived phenolics upon iron ions (Fe) depletion. Promotes disease resistance toward B.cinerea, H.arabidopsidis and P.syringae pv. tomato DC3000. Required during rhizobacteria-mediated (e.g. P.fluorescens WCS417r) broad-spectrum induced systemic resistance (ISR) against several pathogens. The chain is Beta-glucosidase 42 from Arabidopsis thaliana (Mouse-ear cress).